Consider the following 243-residue polypeptide: Uridylate kinase (243 aa).

12–15 provides a ligand contact to ATP; it reads KLSG. The tract at residues 20–25 is involved in allosteric activation by GTP; the sequence is GPGGSG. Gly-56 contributes to the UMP binding site. 2 residues coordinate ATP: Gly-57 and Arg-61. UMP contacts are provided by residues Asp-76 and 137–144; that span reads TGSPYFST. Positions 165, 171, and 174 each coordinate ATP.

It belongs to the UMP kinase family. Homohexamer.

It localises to the cytoplasm. It catalyses the reaction UMP + ATP = UDP + ADP. It functions in the pathway pyrimidine metabolism; CTP biosynthesis via de novo pathway; UDP from UMP (UMPK route): step 1/1. Allosterically activated by GTP. Inhibited by UTP. Its function is as follows. Catalyzes the reversible phosphorylation of UMP to UDP. This is Uridylate kinase from Oenococcus oeni (strain ATCC BAA-331 / PSU-1).